An 82-amino-acid polypeptide reads, in one-letter code: Escargot/snail protein homolog (82 aa).

4 C2H2-type zinc fingers span residues 1–5 (HQQFH), 18–40 (FSCK…IRTH), 44–66 (CKCP…IRTH), and 72–82 (FSCQHCQSAFV).

This sequence belongs to the snail C2H2-type zinc-finger protein family.

The protein localises to the nucleus. The polypeptide is Escargot/snail protein homolog (Calliphora vicina (Blue blowfly)).